The primary structure comprises 23 residues: Maculatin-1.2 (23 aa).

Alanine 23 carries the post-translational modification Alanine amide.

As to expression, expressed by the skin dorsal glands.

It is found in the secreted. Functionally, shows antibacterial activity against S.aureus and S.uberis. This is Maculatin-1.2 from Ranoidea genimaculata (Brown-spotted tree frog).